A 188-amino-acid polypeptide reads, in one-letter code: Protein TIFY 9 (188 aa).

The interval 20 to 41 is disordered; sequence DADDRHAKSGGSSASSSSSIRG. Low complexity predominate over residues 28-38; that stretch reads SGGSSASSSSS. The region spanning 80 to 114 is the Tify domain; it reads AAAAAAPMTLFYNGSVAVFDVSHDKAEAIMRMATE. Residues 135-160 carry the Jas motif; it reads PLTRTKSLQRFLSKRKERLTSLGPYQ. A disordered region spans residues 156–188; the sequence is LGPYQVGGPAAVGATTSTTTKSFLAKEEEHTAS. Over residues 179–188 the composition is skewed to basic and acidic residues; that stretch reads LAKEEEHTAS.

The protein belongs to the TIFY/JAZ family. As to quaternary structure, interacts with COI1A and COI2 in a coronatine-dependent manner. Coronatine is an analog of jasmonoyl isoleucine (JA-Ile). Ubiquitinated. Targeted for degradation by the SCF(COI1) E3 ubiquitin ligase-proteasome pathway during jasmonate signaling.

Functionally, repressor of jasmonate responses. This is Protein TIFY 9 from Oryza sativa subsp. japonica (Rice).